The chain runs to 262 residues: Acyl-[acyl-carrier-protein]--UDP-N-acetylglucosamine O-acyltransferase (262 aa).

The protein belongs to the transferase hexapeptide repeat family. LpxA subfamily. Homotrimer.

The protein resides in the cytoplasm. It catalyses the reaction a (3R)-hydroxyacyl-[ACP] + UDP-N-acetyl-alpha-D-glucosamine = a UDP-3-O-[(3R)-3-hydroxyacyl]-N-acetyl-alpha-D-glucosamine + holo-[ACP]. It participates in glycolipid biosynthesis; lipid IV(A) biosynthesis; lipid IV(A) from (3R)-3-hydroxytetradecanoyl-[acyl-carrier-protein] and UDP-N-acetyl-alpha-D-glucosamine: step 1/6. Its function is as follows. Involved in the biosynthesis of lipid A, a phosphorylated glycolipid that anchors the lipopolysaccharide to the outer membrane of the cell. This Haemophilus influenzae (strain ATCC 51907 / DSM 11121 / KW20 / Rd) protein is Acyl-[acyl-carrier-protein]--UDP-N-acetylglucosamine O-acyltransferase.